The sequence spans 303 residues: Short chain dehydrogenase pigC (303 aa).

NADP(+)-binding residues include I45, D103, N130, R164, Y196, K200, and T231. Residue Y196 is the Proton donor of the active site. Catalysis depends on K200, which acts as the Lowers pKa of active site Tyr.

This sequence belongs to the short-chain dehydrogenases/reductases (SDR) family.

It participates in secondary metabolite biosynthesis. In terms of biological role, short chain dehydrogenase; part of the gene cluster that mediates the biosynthesis of azaphilone pigments (MonAzPs), a complex mixture of compounds with a common azaphilone skeleton very widely used as food colorants. Within the pathway, pigC intercepts the very reactive benzaldehyde produced by the nrPKS pigA to reduce the omega-1 carbonyl to the alcohol to provide the first stable enzyme-free MonAzPs intermediate, 6-(4-hydroxy-2-oxopentyl)-3-methyl-2,4-dioxocyclohexane carbaldehyde, also known as M7PKS-1. The first step of the pathway is performed by the nrPKS pigA that forms the hexaketide precursor from successive condensations of five malonyl-CoA units, with a simple acetyl-CoA starter unit. The role of esterase pigG is not clear, but it may play at most a supplementary role in the formation of the benzaldehyde produced by the pigA nrPKS. This very reactive benzaldehyde is intercepted by the pigC ketoreductase that to provide the first stable enzyme-free MonAzPs intermediate, M7PKS-1. The FAD-dependent monooxygenase pigN hydroxylates M7PKS-1 at C-4, which triggers the formation of the pyran ring. PigJ, pigK and pigD are involved in the acetylation of the pyran ring. PigJ and pigK form the two subunits of a dedicated fungal FAS that produces the side chain fatty acyl moiety of MonAzPs and pigD transfers the fatty acyl chain to the C-4 alcohol. PigM and pigO are involved in the elimination of the omega-1 alcohol. PigM acts as an O-acetyltransferase that synthesizes the putative O-11 acetyl intermediate whereas pigO eliminates acetic acid to yield an intermediate with a C10(11) double bond. The dehydration of the C-11 alcohol followed by the reduction of the C6(7) double bond by the NAD(P)H-dependent oxidoreductase pigE increases the electrophilicity of the C-5 ketone of the resulting acyl benzopyran. This in turn sets up the C-5 ketone for an intramolecular Knoevenagel aldol condensation with the C-20 enol of the side chain. This condensation affords the characteristic linear tricyclic carbon skeletons of the yellow pigments that serve as the common precursors for the classical yellow pigments monascin and ankaflavin, orange pigments rubopunctatin and monascorubrin, and red pigments ribropunctamine and monascorubramine. The FAD-dependent oxidoreductase pigF is especially invoved in the biosynthesis of orange and red pigments via desaturation of C6(7). The sequence is that of Short chain dehydrogenase pigC from Monascus ruber (Mold).